The primary structure comprises 250 residues: MASRYDRAITVFSPDGHLFQVEYAQEAVKKGSTAVGIRGTNIVVLGVEKKSVAKLQDERTVRKICALDDHVCMAFAGLTADARVVINRARVECQSHKLTVEDPVTVEYITRFIATLKQKYTQSNGRRPFGISALIVGFDDDGIPRLYQTDPSGTYHAWKANAIGRSAKTVREFLEKNYTEDAIASDNEAIKLAIKALLEVVQSGGKNIELAIIRRNQPLKMFSAKEVELYVTEIEKEKEEAEKKKSKKSV.

Serine 132 carries O-linked (GlcNAc) serine glycosylation.

Belongs to the peptidase T1A family. The 26S proteasome consists of a 20S proteasome core and two 19S regulatory subunits. The 20S proteasome core is a barrel-shaped complex made of 28 subunits that are arranged in four stacked rings. The two outer rings are each formed by seven alpha subunits, and the two inner rings are formed by seven beta subunits. The proteolytic activity is exerted by three beta-subunits PSMB5, PSMB6 and PSMB7. PSMA7 interacts directly with the PSMG1-PSMG2 heterodimer which promotes 20S proteasome assembly. Interacts with HIF1A. Interacts with RAB7A. Interacts with PRKN. Interacts with ABL1 and ABL2. Interacts with EMAP2. Interacts with MAVS.

It localises to the cytoplasm. The protein localises to the nucleus. Component of the 20S core proteasome complex involved in the proteolytic degradation of most intracellular proteins. This complex plays numerous essential roles within the cell by associating with different regulatory particles. Associated with two 19S regulatory particles, forms the 26S proteasome and thus participates in the ATP-dependent degradation of ubiquitinated proteins. The 26S proteasome plays a key role in the maintenance of protein homeostasis by removing misfolded or damaged proteins that could impair cellular functions, and by removing proteins whose functions are no longer required. Associated with the PA200 or PA28, the 20S proteasome mediates ubiquitin-independent protein degradation. This type of proteolysis is required in several pathways including spermatogenesis (20S-PA200 complex) or generation of a subset of MHC class I-presented antigenic peptides (20S-PA28 complex). Inhibits the transactivation function of HIF-1A under both normoxic and hypoxia-mimicking conditions. The interaction with EMAP2 increases the proteasome-mediated HIF-1A degradation under the hypoxic conditions. Plays a role in hepatitis C virus internal ribosome entry site-mediated translation. Mediates nuclear translocation of the androgen receptor (AR) and thereby enhances androgen-mediated transactivation. Promotes MAVS degradation and thereby negatively regulates MAVS-mediated innate immune response. The polypeptide is Proteasome subunit alpha type-7-like (PSMA7L) (Macaca fascicularis (Crab-eating macaque)).